A 151-amino-acid polypeptide reads, in one-letter code: Chaperonin GroEL (151 aa).

ATP is bound at residue 41 to 45 (DGTTT).

It belongs to the chaperonin (HSP60) family. In terms of assembly, forms a cylinder of 14 subunits composed of two heptameric rings stacked back-to-back. Interacts with the co-chaperonin GroES.

It is found in the cytoplasm. It carries out the reaction ATP + H2O + a folded polypeptide = ADP + phosphate + an unfolded polypeptide.. Its function is as follows. Together with its co-chaperonin GroES, plays an essential role in assisting protein folding. The GroEL-GroES system forms a nano-cage that allows encapsulation of the non-native substrate proteins and provides a physical environment optimized to promote and accelerate protein folding. The polypeptide is Chaperonin GroEL (Mycobacteroides chelonae (Mycobacterium chelonae)).